The following is a 165-amino-acid chain: Putative pre-16S rRNA nuclease (165 aa).

It belongs to the YqgF nuclease family.

The protein localises to the cytoplasm. In terms of biological role, could be a nuclease involved in processing of the 5'-end of pre-16S rRNA. The sequence is that of Putative pre-16S rRNA nuclease from Beijerinckia indica subsp. indica (strain ATCC 9039 / DSM 1715 / NCIMB 8712).